The sequence spans 95 residues: Small ribosomal subunit protein bS6 (95 aa).

Belongs to the bacterial ribosomal protein bS6 family.

Functionally, binds together with bS18 to 16S ribosomal RNA. This chain is Small ribosomal subunit protein bS6, found in Corynebacterium kroppenstedtii (strain DSM 44385 / JCM 11950 / CIP 105744 / CCUG 35717).